We begin with the raw amino-acid sequence, 160 residues long: Cyclic pyranopterin monophosphate synthase (160 aa).

Substrate is bound by residues Leu75–His77 and Met113–Glu114. The active site involves Asp128.

This sequence belongs to the MoaC family. Homohexamer; trimer of dimers.

The catalysed reaction is (8S)-3',8-cyclo-7,8-dihydroguanosine 5'-triphosphate = cyclic pyranopterin phosphate + diphosphate. It participates in cofactor biosynthesis; molybdopterin biosynthesis. In terms of biological role, catalyzes the conversion of (8S)-3',8-cyclo-7,8-dihydroguanosine 5'-triphosphate to cyclic pyranopterin monophosphate (cPMP). This chain is Cyclic pyranopterin monophosphate synthase, found in Beijerinckia indica subsp. indica (strain ATCC 9039 / DSM 1715 / NCIMB 8712).